The sequence spans 659 residues: Cysteine-rich receptor-like protein kinase 7 (659 aa).

The first 23 residues, 1 to 23, serve as a signal peptide directing secretion; sequence MSSLFPFIFLFLFSFLTSFRASA. Topologically, residues 24–273 are extracellular; the sequence is QDPRFLAYYC…SLSDKSGNSN (250 aa). 2 Gnk2-homologous domains span residues 27–131 and 142–244; these read RFLA…HKNI and FILR…LYDF. 5 N-linked (GlcNAc...) asparagine glycosylation sites follow: Asn35, Asn42, Asn60, Asn69, and Asn103. Asn246 carries N-linked (GlcNAc...) asparagine glycosylation. Residues 274–294 traverse the membrane as a helical segment; that stretch reads VVVVAVVVPIIVAVLIFIAGY. Over 295-659 the chain is Cytoplasmic; sequence CFFAKRAKKT…DKSMSDLDPR (365 aa). In terms of domain architecture, Protein kinase spans 336 to 622; the sequence is FSENNKIGRG…ALPAPQQPGF (287 aa). ATP is bound by residues 342-350 and Lys364; that span reads IGRGGFGDV. At Tyr409 the chain carries Phosphotyrosine. Asp461 (proton acceptor) is an active-site residue. Ser465 carries the post-translational modification Phosphoserine. A Phosphothreonine modification is found at Thr501. The residue at position 509 (Tyr509) is a Phosphotyrosine. Positions 626–659 are disordered; it reads SRPGTNRLDSDQSTTNKSVTVSIDDKSMSDLDPR. The segment covering 636-646 has biased composition (polar residues); it reads DQSTTNKSVTV. Residues 648–659 are compositionally biased toward basic and acidic residues; the sequence is IDDKSMSDLDPR.

It belongs to the protein kinase superfamily. Ser/Thr protein kinase family. CRK subfamily.

The protein localises to the membrane. It catalyses the reaction L-seryl-[protein] + ATP = O-phospho-L-seryl-[protein] + ADP + H(+). The catalysed reaction is L-threonyl-[protein] + ATP = O-phospho-L-threonyl-[protein] + ADP + H(+). The protein is Cysteine-rich receptor-like protein kinase 7 (CRK7) of Arabidopsis thaliana (Mouse-ear cress).